A 299-amino-acid chain; its full sequence is Leucine zipper transcription factor-like protein 1 (299 aa).

Positions 96-296 form a coiled coil; sequence LKLQTDISEL…DLRKRLAQYE (201 aa). The tract at residues 145 to 299 is interaction with BSS9; the sequence is GTAELLNKEI…KRLAQYEPED (155 aa).

The protein belongs to the LZTFL1 family. As to quaternary structure, self-associates. Interacts with BBS9; the interaction mediates the association of LZTL1 with the BBsome complex and regulates BBSome ciliary trafficking. Expressed in prostate, ovary, stomach, pancreas, esophagus, breast, liver, bladder, kidney, thyroid, colon and lung (at protein level). Down-regulated in multiple primary tumors (at protein level). Detected in testis, heart, skeletal muscle, thymus, spleen, small intestine, and peripheral blood leukocytes.

It is found in the cytoplasm. Its function is as follows. Regulates ciliary localization of the BBSome complex. Together with the BBSome complex, controls SMO ciliary trafficking and contributes to the sonic hedgehog (SHH) pathway regulation. May play a role in neurite outgrowth. May have tumor suppressor function. The chain is Leucine zipper transcription factor-like protein 1 (LZTFL1) from Homo sapiens (Human).